A 164-amino-acid polypeptide reads, in one-letter code: MHYEKKLSIELKEKLISVNRVSKTVKGGRIFSFTALTVVGNNQGKVGFGYGKAREVPSAIQKAMEKARKNMIIIPLFKNTIQHSVTGLHTGSFIFMKPASEGTGIIAGGAMRSVLEVAGIQNILAKIYGSTNPINVVRATLNGLKKIRSPEMISKKRGKIITII.

Residues 11-74 (LKEKLISVNR…EKARKNMIII (64 aa)) form the S5 DRBM domain.

This sequence belongs to the universal ribosomal protein uS5 family. As to quaternary structure, part of the 30S ribosomal subunit. Contacts proteins S4 and S8.

Its function is as follows. With S4 and S12 plays an important role in translational accuracy. In terms of biological role, located at the back of the 30S subunit body where it stabilizes the conformation of the head with respect to the body. The chain is Small ribosomal subunit protein uS5 from Buchnera aphidicola subsp. Cinara cedri (strain Cc).